The sequence spans 347 residues: Haptoglobin (347 aa).

An N-terminal signal peptide occupies residues 1 to 18 (MRALGAVVALLLCGQLFA). The Sushi domain occupies 31–88 (DSCPKPPEIPKGYVEHMVRYHCQTYYKLRTAGDGVYTLDSNKQWTNKVTGEKLPECEA). Intrachain disulfides connect C52–C86 and C90–C207. Residues 103–345 (IMGGSLDAKG…ILDWIQTTIA (243 aa)) enclose the Peptidase S1 domain. N-linked (GlcNAc...) asparagine glycosylation is found at N125, N151, N183, and N232. 2 cysteine pairs are disulfide-bonded: C250–C281 and C292–C322. The segment at 259-264 (VPEKKT) is interaction with CD163.

The protein belongs to the peptidase S1 family. Tetramer of two alpha and two beta chains; disulfide-linked. The hemoglobin/haptoglobin complex is composed of a haptoglobin dimer bound to two hemoglobin alpha-beta dimers. Interacts with CD163. Interacts with ERGIC3. As to expression, expressed by the liver and secreted in plasma.

It localises to the secreted. Its function is as follows. As a result of hemolysis, hemoglobin is found to accumulate in the kidney and is secreted in the urine. Haptoglobin captures, and combines with free plasma hemoglobin to allow hepatic recycling of heme iron and to prevent kidney damage. Haptoglobin also acts as an antioxidant, has antibacterial activity and plays a role in modulating many aspects of the acute phase response. Hemoglobin/haptoglobin complexes are rapidly cleared by the macrophage CD163 scavenger receptor expressed on the surface of liver Kupfer cells through an endocytic lysosomal degradation pathway. The polypeptide is Haptoglobin (HP) (Sus scrofa (Pig)).